The sequence spans 269 residues: 4-hydroxy-tetrahydrodipicolinate reductase (269 aa).

Residues 10–15, E36, 99–101, and 123–126 contribute to the NAD(+) site; these read GANGRM, GTT, and AANF. H156 (proton donor/acceptor) is an active-site residue. H157 provides a ligand contact to (S)-2,3,4,5-tetrahydrodipicolinate. Catalysis depends on K160, which acts as the Proton donor. 166–167 lines the (S)-2,3,4,5-tetrahydrodipicolinate pocket; the sequence is GT.

The protein belongs to the DapB family.

The protein resides in the cytoplasm. It catalyses the reaction (S)-2,3,4,5-tetrahydrodipicolinate + NAD(+) + H2O = (2S,4S)-4-hydroxy-2,3,4,5-tetrahydrodipicolinate + NADH + H(+). The enzyme catalyses (S)-2,3,4,5-tetrahydrodipicolinate + NADP(+) + H2O = (2S,4S)-4-hydroxy-2,3,4,5-tetrahydrodipicolinate + NADPH + H(+). It participates in amino-acid biosynthesis; L-lysine biosynthesis via DAP pathway; (S)-tetrahydrodipicolinate from L-aspartate: step 4/4. Its function is as follows. Catalyzes the conversion of 4-hydroxy-tetrahydrodipicolinate (HTPA) to tetrahydrodipicolinate. The polypeptide is 4-hydroxy-tetrahydrodipicolinate reductase (Neisseria meningitidis serogroup A / serotype 4A (strain DSM 15465 / Z2491)).